We begin with the raw amino-acid sequence, 320 residues long: Quinolinate synthase (320 aa).

Iminosuccinate contacts are provided by His34 and Ser51. Cys96 provides a ligand contact to [4Fe-4S] cluster. Iminosuccinate contacts are provided by residues 122-124 (YIN) and Ser139. A [4Fe-4S] cluster-binding site is contributed by Cys182. Iminosuccinate contacts are provided by residues 208-210 (HPE) and Thr225. Cys276 is a [4Fe-4S] cluster binding site.

Belongs to the quinolinate synthase family. Type 2 subfamily. Requires [4Fe-4S] cluster as cofactor.

The protein localises to the cytoplasm. It catalyses the reaction iminosuccinate + dihydroxyacetone phosphate = quinolinate + phosphate + 2 H2O + H(+). It participates in cofactor biosynthesis; NAD(+) biosynthesis; quinolinate from iminoaspartate: step 1/1. In terms of biological role, catalyzes the condensation of iminoaspartate with dihydroxyacetone phosphate to form quinolinate. The protein is Quinolinate synthase of Synechococcus sp. (strain ATCC 27144 / PCC 6301 / SAUG 1402/1) (Anacystis nidulans).